A 254-amino-acid polypeptide reads, in one-letter code: Imidazole glycerol phosphate synthase subunit HisF (254 aa).

Catalysis depends on residues aspartate 11 and aspartate 130.

It belongs to the HisA/HisF family. In terms of assembly, heterodimer of HisH and HisF.

It is found in the cytoplasm. It carries out the reaction 5-[(5-phospho-1-deoxy-D-ribulos-1-ylimino)methylamino]-1-(5-phospho-beta-D-ribosyl)imidazole-4-carboxamide + L-glutamine = D-erythro-1-(imidazol-4-yl)glycerol 3-phosphate + 5-amino-1-(5-phospho-beta-D-ribosyl)imidazole-4-carboxamide + L-glutamate + H(+). The protein operates within amino-acid biosynthesis; L-histidine biosynthesis; L-histidine from 5-phospho-alpha-D-ribose 1-diphosphate: step 5/9. Functionally, IGPS catalyzes the conversion of PRFAR and glutamine to IGP, AICAR and glutamate. The HisF subunit catalyzes the cyclization activity that produces IGP and AICAR from PRFAR using the ammonia provided by the HisH subunit. In Laribacter hongkongensis (strain HLHK9), this protein is Imidazole glycerol phosphate synthase subunit HisF.